The sequence spans 158 residues: Transcription factor BTF3 homolog 4 (158 aa).

An NAC-A/B domain is found at 33–98; sequence TADDKKLQSS…AEVKQITEML (66 aa). The tract at residues 123–158 is disordered; sequence QVLDSKASKPEDIEEEDDDVPELVGNFDEASKNEAN. Acidic residues predominate over residues 134-143; that stretch reads DIEEEDDDVP.

It belongs to the NAC-beta family.

This is Transcription factor BTF3 homolog 4 (btf3l4) from Xenopus laevis (African clawed frog).